A 773-amino-acid chain; its full sequence is MAPKTLYEKIFDSHLVHEEADGTCLIYIDRHLVHEVTSPQAFEGLRNANRKVRRTDCTLATVDHNIPTASRKSYRDTKSFVEQVDSRTQCMTLEENVKAFGLTFFGLSDNRQGIVHIIGPEQGFTLPGATIVCGDSHTSTHGAFGALAFGIGTSEVEHVLATQTLLQKRAKNMLIQVDGELSQGVTSKDIILHIIGLIGTAGGTGHVIEYAGSTIRSLSMEARMSICNMSIEAGARAGLIAPDEITYEYIKGRPLAPKQGEAWDQALAYWKTLPSDEGAQYDTVIKIDAKDIPPTVTWGTSPQDVVAITGTVPDPKNASNEAEAKAWTRALEYMGLEAGTPMEKIKIDKVFIGSCTNARIEDLRAAARVLHGRKVADGLYCMLVPGSGLVKKQAEAEGLDKIFQAAGFDWREAGCSMCLGMNPDQLAPGERCASTSNRNFEGRQGAGGRTHLMSPAMAAACAVTGYLTDVRKVVGHSSAKVGSDAAKPAFEIEVSDAKSYLVDATPAPAPTNVAAAGAGALTDEDALRDVPASHISSSGGGMEKFTTLTGIAAPLERSNVDTDLIIPKQFLKTIKRTGLGSALFWPLRYDAKTGEPDPAFVLNQKPYDQSKILVVTGPNFGCGSSREHAAWSLLDFGIRAVIAESFGDIFRNNLTKNGQLPVVLSRAQIQRLTQDAKAGKQITVDLVDQLVITADGKEKFSFETPEFTRHCLINGLDDIALTLQRDAQIGAFERNRSTHTPWLDGFGYHANSNSSSLLDSAKPLVNNVTATDW.

[4Fe-4S] cluster is bound by residues C355, C415, and C418.

This sequence belongs to the aconitase/IPM isomerase family. Monomer. Requires [4Fe-4S] cluster as cofactor.

The catalysed reaction is (2R,3S)-3-isopropylmalate = (2S)-2-isopropylmalate. It functions in the pathway amino-acid biosynthesis; L-leucine biosynthesis; L-leucine from 3-methyl-2-oxobutanoate: step 2/4. Functionally, catalyzes the isomerization between 2-isopropylmalate and 3-isopropylmalate, via the formation of 2-isopropylmaleate. This is 3-isopropylmalate dehydratase (LEU1) from Mycosarcoma maydis (Corn smut fungus).